We begin with the raw amino-acid sequence, 181 residues long: UPF0302 protein LMHCC_0635 (181 aa).

Belongs to the UPF0302 family.

This Listeria monocytogenes serotype 4a (strain HCC23) protein is UPF0302 protein LMHCC_0635.